We begin with the raw amino-acid sequence, 280 residues long: Beta-lactamase OXA-58 (280 aa).

An N-terminal signal peptide occupies residues 1–18 (MKLLKILSLVCLSISIGA). Cysteine 19 carries the N-palmitoyl cysteine lipid modification. Cysteine 19 carries the S-diacylglycerol cysteine lipid modification. The Acyl-ester intermediate role is filled by serine 83. A beta-lactam contacts are provided by serine 83, lysine 86, serine 130, serine 221, tryptophan 223, and arginine 263. Lysine 86 carries the post-translational modification N6-carboxylysine.

This sequence belongs to the class-D beta-lactamase family. In terms of assembly, monomer. Dimer. Carboxylated on the epsilon-amino group of a lysine, with the resulting carbamate functional group serving as a general base. Probably N-carboxylated at Lys-86 at neutral pH in vivo and undergoes complete N-decarboxylation, at pH 4.1, in vitro. N-carboxylation at Lys-86 probably increases catalytic activity under physiological conditions.

It localises to the cell membrane. The enzyme catalyses a beta-lactam + H2O = a substituted beta-amino acid. Its activity is regulated as follows. Activated approximately 3-fold by the presence of 0.1M NaHCO3. In terms of biological role, class D beta-lactamase which confers resistance to the beta-lactam antibiotics, including penicillins and oxacillin, and moderate resistance to carbapenems such as imipenem; in the DH10B strain of E.coli. Acts via hydrolysis of the beta-lactam ring. Has benzylpenicillin-, oxacillin-, cephalothin- and imipenem-hydrolyzing activities. The polypeptide is Beta-lactamase OXA-58 (Acinetobacter baumannii).